The sequence spans 169 residues: Peptide methionine sulfoxide reductase MsrA (169 aa).

Cys13 is a catalytic residue.

It belongs to the MsrA Met sulfoxide reductase family.

The catalysed reaction is L-methionyl-[protein] + [thioredoxin]-disulfide + H2O = L-methionyl-(S)-S-oxide-[protein] + [thioredoxin]-dithiol. It carries out the reaction [thioredoxin]-disulfide + L-methionine + H2O = L-methionine (S)-S-oxide + [thioredoxin]-dithiol. Has an important function as a repair enzyme for proteins that have been inactivated by oxidation. Catalyzes the reversible oxidation-reduction of methionine sulfoxide in proteins to methionine. In Mycolicibacterium gilvum (strain PYR-GCK) (Mycobacterium gilvum (strain PYR-GCK)), this protein is Peptide methionine sulfoxide reductase MsrA.